The following is a 401-amino-acid chain: Multidrug resistance protein MdtH (401 aa).

11 consecutive transmembrane segments (helical) span residues 13–33 (YFLL…FPLI), 34–54 (SIRF…ALGL), 99–116 (PWIL…GTLF), 139–159 (LLMM…SWLL), 165–185 (FVCW…AWLL), 214–234 (VLTL…LPIV), 243–263 (AAVK…LYPL), 277–297 (LMAG…ITHL), 299–319 (TLFM…PARE), 340–360 (LGLA…YDTG), and 368–388 (LPWF…YWQF).

The protein belongs to the major facilitator superfamily. DHA1 family. MdtH (TC 2.A.1.2.21) subfamily.

The protein resides in the cell inner membrane. The sequence is that of Multidrug resistance protein MdtH from Yersinia pseudotuberculosis serotype O:1b (strain IP 31758).